The sequence spans 345 residues: Tetraacyldisaccharide 4'-kinase (345 aa).

ATP is bound at residue threonine 61–threonine 68.

It belongs to the LpxK family.

The enzyme catalyses a lipid A disaccharide + ATP = a lipid IVA + ADP + H(+). Its pathway is glycolipid biosynthesis; lipid IV(A) biosynthesis; lipid IV(A) from (3R)-3-hydroxytetradecanoyl-[acyl-carrier-protein] and UDP-N-acetyl-alpha-D-glucosamine: step 6/6. Its function is as follows. Transfers the gamma-phosphate of ATP to the 4'-position of a tetraacyldisaccharide 1-phosphate intermediate (termed DS-1-P) to form tetraacyldisaccharide 1,4'-bis-phosphate (lipid IVA). The sequence is that of Tetraacyldisaccharide 4'-kinase from Xanthomonas axonopodis pv. citri (strain 306).